Consider the following 319-residue polypeptide: F-box only protein 8 (319 aa).

The region spanning 68-111 (FINLEMLPPELSFTILSYLNATDLCLASCVWQDLANDELLWQGL) is the F-box domain. Residues 146–276 (FNANPEEGVS…LILLSIDLTS (131 aa)) enclose the SEC7 domain.

In terms of tissue distribution, high expression in brain, heart, kidney, liver, lung, skeletal muscle, testis, and day-7 embryos.

May promote guanine-nucleotide exchange on an ARF. Promotes the activation of ARF through replacement of GDP with GTP (Potential). In Mus musculus (Mouse), this protein is F-box only protein 8 (Fbxo8).